A 506-amino-acid chain; its full sequence is Cobyric acid synthase (506 aa).

Positions 251 to 448 (DITIAIVQLP…LHGLFDSDAF (198 aa)) constitute a GATase cobBQ-type domain. C332 (nucleophile) is an active-site residue. Residue H440 is part of the active site.

The protein belongs to the CobB/CobQ family. CobQ subfamily.

It functions in the pathway cofactor biosynthesis; adenosylcobalamin biosynthesis. Functionally, catalyzes amidations at positions B, D, E, and G on adenosylcobyrinic A,C-diamide. NH(2) groups are provided by glutamine, and one molecule of ATP is hydrogenolyzed for each amidation. This is Cobyric acid synthase from Salmonella agona (strain SL483).